We begin with the raw amino-acid sequence, 367 residues long: Probable cysteine protease RD19D (367 aa).

An N-terminal signal peptide occupies residues 1–22 (MVAKALAQLITCIILFCHVVAS). The propeptide at 23–136 (VEDLTIRQVT…AEAPMVEVDG (114 aa)) is activation peptide. The N-linked (GlcNAc...) asparagine glycan is linked to Asn-61. Cystine bridges form between Cys-158-Cys-208 and Cys-192-Cys-241. The active site involves Cys-161. The N-linked (GlcNAc...) asparagine glycan is linked to Asn-254. Cys-297 and Cys-352 form a disulfide bridge. Residues His-304 and Asn-331 contribute to the active site.

Belongs to the peptidase C1 family.

In terms of biological role, probable thiol protease. The protein is Probable cysteine protease RD19D of Arabidopsis thaliana (Mouse-ear cress).